Here is a 297-residue protein sequence, read N- to C-terminus: uncharacterized protein (297 aa).

Positions 1–24 are cleaved as a signal peptide; the sequence is MRAINKFLITVCIALLASVAVALG. The heme site is built by C58, C61, H62, C141, C144, H145, C167, C170, H171, C223, C226, H227, C264, C267, and H268. Positions 277–297 are disordered; it reads TNSVDTWSREGEGAEVQQLPH.

Post-translationally, binds 5 heme groups per subunit.

This is an uncharacterized protein from Archaeoglobus fulgidus (strain ATCC 49558 / DSM 4304 / JCM 9628 / NBRC 100126 / VC-16).